Here is a 345-residue protein sequence, read N- to C-terminus: UDP-N-acetylenolpyruvoylglucosamine reductase (345 aa).

An FAD-binding PCMH-type domain is found at 59-254 (VGGPAACLAR…RKATQPLGRP (196 aa)). R209 is an active-site residue. C258 acts as the Proton donor in catalysis. Residue E328 is part of the active site.

The protein belongs to the MurB family. It depends on FAD as a cofactor.

Its subcellular location is the cytoplasm. The catalysed reaction is UDP-N-acetyl-alpha-D-muramate + NADP(+) = UDP-N-acetyl-3-O-(1-carboxyvinyl)-alpha-D-glucosamine + NADPH + H(+). It functions in the pathway cell wall biogenesis; peptidoglycan biosynthesis. Functionally, cell wall formation. This chain is UDP-N-acetylenolpyruvoylglucosamine reductase, found in Syntrophobacter fumaroxidans (strain DSM 10017 / MPOB).